We begin with the raw amino-acid sequence, 492 residues long: Glycylpeptide N-tetradecanoyltransferase (492 aa).

Residues 1 to 22 (MSDSKDRKGKAPEGQSSEKKDG) show a composition bias toward basic and acidic residues. The tract at residues 1-45 (MSDSKDRKGKAPEGQSSEKKDGAVNITPQMAESLLENNPALRNET) is disordered. Residues 82–85 (YKFW), 215–217 (LCI), and 223–227 (SKRLT) each bind tetradecanoyl-CoA. Residue leucine 492 is the Proton acceptor; via carboxylate of the active site.

It belongs to the NMT family. Monomer.

The protein resides in the cytoplasm. The enzyme catalyses N-terminal glycyl-[protein] + tetradecanoyl-CoA = N-tetradecanoylglycyl-[protein] + CoA + H(+). Adds a myristoyl group to the N-terminal glycine residue of certain cellular proteins. The chain is Glycylpeptide N-tetradecanoyltransferase (nmt1) from Aspergillus fumigatus (strain ATCC MYA-4609 / CBS 101355 / FGSC A1100 / Af293) (Neosartorya fumigata).